We begin with the raw amino-acid sequence, 284 residues long: Homeobox protein CDX-4 (284 aa).

Disordered regions lie at residues Pro15–Pro40 and Gly120–Ser155. The span at Gly22–Ser37 shows a compositional bias: gly residues. The segment at residues Lys173–Ile232 is a DNA-binding region (homeobox). The segment covering Gln238–Ile253 has biased composition (polar residues). The tract at residues Gln238–Pro259 is disordered.

Belongs to the Caudal homeobox family.

Its subcellular location is the nucleus. This chain is Homeobox protein CDX-4 (CDX4), found in Homo sapiens (Human).